Here is a 286-residue protein sequence, read N- to C-terminus: NADPH-dependent 7-cyano-7-deazaguanine reductase (286 aa).

Substrate is bound at residue valine 88–serine 90. Serine 90–lysine 91 serves as a coordination point for NADPH. Cysteine 194 functions as the Thioimide intermediate in the catalytic mechanism. Aspartate 201 acts as the Proton donor in catalysis. Histidine 233–glutamate 234 is a substrate binding site. Arginine 262–glycine 263 is a binding site for NADPH.

It belongs to the GTP cyclohydrolase I family. QueF type 2 subfamily. Homodimer.

It localises to the cytoplasm. It carries out the reaction 7-aminomethyl-7-carbaguanine + 2 NADP(+) = 7-cyano-7-deazaguanine + 2 NADPH + 3 H(+). The protein operates within tRNA modification; tRNA-queuosine biosynthesis. Its function is as follows. Catalyzes the NADPH-dependent reduction of 7-cyano-7-deazaguanine (preQ0) to 7-aminomethyl-7-deazaguanine (preQ1). This is NADPH-dependent 7-cyano-7-deazaguanine reductase from Colwellia psychrerythraea (strain 34H / ATCC BAA-681) (Vibrio psychroerythus).